The sequence spans 265 residues: Putative cysteine-rich receptor-like protein kinase 9 (265 aa).

An N-terminal signal peptide occupies residues 1 to 23 (MSSLISFIFLFLFSFLTSFKASA). Gnk2-homologous domains are found at residues 27 to 131 (FYLN…DKNI) and 142 to 244 (FILS…LYSF). N-linked (GlcNAc...) asparagine glycosylation is found at Asn-35, Asn-60, Asn-69, Asn-153, Asn-177, and Asn-246.

It belongs to the protein kinase superfamily. Ser/Thr protein kinase family. CRK subfamily.

It localises to the secreted. The polypeptide is Putative cysteine-rich receptor-like protein kinase 9 (CRK9) (Arabidopsis thaliana (Mouse-ear cress)).